The sequence spans 56 residues: DSLGREAKCNNNAGGCTKIYNPVCGTDGNTYPNECMLCVENQKRQMPVLIQRSGPC.

A Kazal-like domain is found at 3–56 (LGREAKCNNNAGGCTKIYNPVCGTDGNTYPNECMLCVENQKRQMPVLIQRSGPC). 3 disulfides stabilise this stretch: Cys-9–Cys-38, Cys-16–Cys-35, and Cys-24–Cys-56.

Its subcellular location is the secreted. Serine protease inhibitor which exhibits anti-trypsin activity. In the pancreas, protects against trypsin-catalyzed premature activation of zymogens. In terms of biological role, in the male reproductive tract, binds to sperm heads where it modulates sperm capacitance by inhibiting calcium uptake and nitrogen oxide (NO) production. This is Serine protease inhibitor Kazal-type 1 (SPINK1) from Equus caballus (Horse).